The chain runs to 403 residues: Rhomboid-like protein 15 (403 aa).

A run of 5 helical transmembrane segments spans residues 22-42, 70-90, 103-123, 141-161, and 176-196; these read IPFL…ICLL, AIIF…LVPM, LLYL…LIAS, AIGF…LSGV, and LYPW…SLLG. Ser-145 serves as the catalytic Nucleophile. The active-site Charge relay system is the His-197. The helical transmembrane segment at 198–218 threads the bilayer; the sequence is LCGILSGFSYSYGLFNFLMPG. Residues 282 to 316 form a disordered region; sequence EASNQSSEDSRFPGRGRTLSTARDPTAPAGETDPN. In terms of domain architecture, UBA spans 361–401; it reads AASEEQIQKLVAMGFDRTQVEVALAAADDDLTVAVEILMSQ.

This sequence belongs to the peptidase S54 family.

Its subcellular location is the membrane. In terms of biological role, probable rhomboid-type serine protease that catalyzes intramembrane proteolysis. May function in senescence. The chain is Rhomboid-like protein 15 from Arabidopsis thaliana (Mouse-ear cress).